The sequence spans 210 residues: Probable GTP-binding protein EngB (210 aa).

Residues 22-198 (FLPEYAFIGR…LTYIDEVNQE (177 aa)) form the EngB-type G domain. GTP-binding positions include 30–37 (GRSNVGKS), 57–61 (GKTQL), 75–78 (DLPG), 142–145 (TKAD), and 177–179 (TSS). Mg(2+) is bound by residues serine 37 and threonine 59.

This sequence belongs to the TRAFAC class TrmE-Era-EngA-EngB-Septin-like GTPase superfamily. EngB GTPase family. Requires Mg(2+) as cofactor.

Functionally, necessary for normal cell division and for the maintenance of normal septation. The chain is Probable GTP-binding protein EngB from Flavobacterium johnsoniae (strain ATCC 17061 / DSM 2064 / JCM 8514 / BCRC 14874 / CCUG 350202 / NBRC 14942 / NCIMB 11054 / UW101) (Cytophaga johnsonae).